A 180-amino-acid chain; its full sequence is ATP synthase subunit delta (180 aa).

It belongs to the ATPase delta chain family. As to quaternary structure, F-type ATPases have 2 components, F(1) - the catalytic core - and F(0) - the membrane proton channel. F(1) has five subunits: alpha(3), beta(3), gamma(1), delta(1), epsilon(1). F(0) has three main subunits: a(1), b(2) and c(10-14). The alpha and beta chains form an alternating ring which encloses part of the gamma chain. F(1) is attached to F(0) by a central stalk formed by the gamma and epsilon chains, while a peripheral stalk is formed by the delta and b chains.

It is found in the cell inner membrane. Functionally, f(1)F(0) ATP synthase produces ATP from ADP in the presence of a proton or sodium gradient. F-type ATPases consist of two structural domains, F(1) containing the extramembraneous catalytic core and F(0) containing the membrane proton channel, linked together by a central stalk and a peripheral stalk. During catalysis, ATP synthesis in the catalytic domain of F(1) is coupled via a rotary mechanism of the central stalk subunits to proton translocation. Its function is as follows. This protein is part of the stalk that links CF(0) to CF(1). It either transmits conformational changes from CF(0) to CF(1) or is implicated in proton conduction. The sequence is that of ATP synthase subunit delta from Geobacter sp. (strain M21).